A 380-amino-acid polypeptide reads, in one-letter code: Lipid-A-disaccharide synthase (380 aa).

This sequence belongs to the LpxB family.

The catalysed reaction is a lipid X + a UDP-2-N,3-O-bis[(3R)-3-hydroxyacyl]-alpha-D-glucosamine = a lipid A disaccharide + UDP + H(+). The protein operates within bacterial outer membrane biogenesis; LPS lipid A biosynthesis. Its function is as follows. Condensation of UDP-2,3-diacylglucosamine and 2,3-diacylglucosamine-1-phosphate to form lipid A disaccharide, a precursor of lipid A, a phosphorylated glycolipid that anchors the lipopolysaccharide to the outer membrane of the cell. This Azotobacter vinelandii (strain DJ / ATCC BAA-1303) protein is Lipid-A-disaccharide synthase.